Consider the following 127-residue polypeptide: Large ribosomal subunit protein bL17 (127 aa).

Belongs to the bacterial ribosomal protein bL17 family. Part of the 50S ribosomal subunit. Contacts protein L32.

This is Large ribosomal subunit protein bL17 from Legionella pneumophila (strain Paris).